Consider the following 267-residue polypeptide: Serine/arginine-rich splicing factor 7 (267 aa).

One can recognise an RRM domain in the interval 40-113 (TKVYVGNLGT…SRVRVELSTG (74 aa)). Position 53 is an N6-acetyllysine; alternate (lysine 53). Lysine 53 participates in a covalent cross-link: Glycyl lysine isopeptide (Lys-Gly) (interchain with G-Cter in SUMO2); alternate. Serine 61 is subject to Phosphoserine. A sufficient for interaction with NXF1 region spans residues 110-127 (LSTGMPRRSRFDRPPARR). Residues 133-150 (DRCYECGEKGHYAYDCHR) form a CCHC-type zinc finger. A compositionally biased stretch (basic residues) spans 152 to 209 (SRRRRSRSRSRSHSRSRGRRYSRSRSRSRGRRSRSASPRRSRSVSLRRSRSASLRRSR). The segment at 152–267 (SRRRRSRSRS…HRSASPERMD (116 aa)) is disordered. 4 tandem repeats follow at residues 182-189 (RRSRSASP), 190-197 (RRSRSVSL), 198-205 (RRSRSASL), and 206-213 (RRSRSGSI). A 6 X 8 AA repeats of R-R-S-R-S-X-S-X region spans residues 182–255 (RRSRSASPRR…SPKRSRSPSG (74 aa)). Serine 192, serine 194, and serine 196 each carry phosphoserine. Residues serine 210, serine 212, serine 221, serine 223, and serine 225 each carry the phosphoserine modification. The segment covering 223 to 251 (SRSRSRSRSISRPRSSRSKSRSPSPKRSR) has biased composition (basic residues). A 5; approximate repeat occupies 240 to 247 (SKSRSPSP). The stretch at 248–255 (KRSRSPSG) is one 6; approximate repeat. 2 positions are modified to phosphoserine: serine 260 and serine 262.

The protein belongs to the splicing factor SR family. As to quaternary structure, found in large molecular weight complexes containing CCNL1 and the p110 isoforms of either CDC2L1 or CDC2L2. Interacts with CCNL2 and CPSF6. Interacts with NXF1. Interacts with YTHDC1. Post-translationally, extensively phosphorylated on serine residues in the RS domain.

The protein resides in the nucleus. It is found in the cytoplasm. Its function is as follows. Required for pre-mRNA splicing. Represses the splicing of MAPT/Tau exon 10. May function as export adapter involved in mRNA nuclear export such as of histone H2A. Binds mRNA which is thought to be transferred to the NXF1-NXT1 heterodimer for export (TAP/NXF1 pathway); enhances NXF1-NXT1 RNA-binding activity. RNA-binding is semi-sequence specific. The polypeptide is Serine/arginine-rich splicing factor 7 (Srsf7) (Mus musculus (Mouse)).